The chain runs to 208 residues: Probable GTP-binding protein EngB (208 aa).

An EngB-type G domain is found at 23 to 205 (LTSEMVVLGR…RQTLLKYLLT (183 aa)). GTP-binding positions include 31–38 (GRSNVGKS), 57–61 (GKTRL), 84–87 (DLPG), 154–157 (TKFD), and 182–184 (FNA). Mg(2+) contacts are provided by Ser-38 and Thr-59.

Belongs to the TRAFAC class TrmE-Era-EngA-EngB-Septin-like GTPase superfamily. EngB GTPase family. Requires Mg(2+) as cofactor.

In terms of biological role, necessary for normal cell division and for the maintenance of normal septation. In Helicobacter acinonychis (strain Sheeba), this protein is Probable GTP-binding protein EngB.